A 234-amino-acid chain; its full sequence is Transcriptional regulatory protein CseB (234 aa).

The region spanning 6-119 is the Response regulatory domain; that stretch reads HVLFVEDDDV…VLVARIRAVL (114 aa). Asp55 carries the 4-aspartylphosphate modification. Positions 140-234 form a DNA-binding region, ompR/PhoB-type; it reads GGVLTFGDLE…VRGFGYKLKA (95 aa).

Post-translationally, phosphorylated by CseC.

The protein resides in the cytoplasm. Member of the two-component regulatory system CseB/CseC involved in the stability of the cell envelope. CseB activates transcription of RNA polymerase sigma-E factor, in response to changes in the cell envelope. In Streptomyces coelicolor (strain ATCC BAA-471 / A3(2) / M145), this protein is Transcriptional regulatory protein CseB (cseB).